Consider the following 367-residue polypeptide: 3-dehydroquinate synthase (367 aa).

NAD(+) is bound by residues 69 to 74, 103 to 107, 127 to 128, lysine 140, and lysine 149; these read DGEAFK, GVIGD, and TT. Residues glutamate 182, histidine 245, and histidine 262 each coordinate Zn(2+).

The protein belongs to the sugar phosphate cyclases superfamily. Dehydroquinate synthase family. Requires NAD(+) as cofactor. Co(2+) is required as a cofactor. The cofactor is Zn(2+).

The protein localises to the cytoplasm. The enzyme catalyses 7-phospho-2-dehydro-3-deoxy-D-arabino-heptonate = 3-dehydroquinate + phosphate. It participates in metabolic intermediate biosynthesis; chorismate biosynthesis; chorismate from D-erythrose 4-phosphate and phosphoenolpyruvate: step 2/7. Catalyzes the conversion of 3-deoxy-D-arabino-heptulosonate 7-phosphate (DAHP) to dehydroquinate (DHQ). The protein is 3-dehydroquinate synthase of Pseudomonas syringae pv. tomato (strain ATCC BAA-871 / DC3000).